A 93-amino-acid chain; its full sequence is Islet amyloid polypeptide (93 aa).

The first 23 residues, 1–23 (MRCISRLPAVLLILSVALGHLRA), serve as a signal peptide directing secretion. Residues 24-35 (TPVGSGTNPQVD) constitute a propeptide that is removed on maturation. Residues Cys-39 and Cys-44 are joined by a disulfide bond. Tyr-74 carries the tyrosine amide modification. Positions 78–93 (NVAEDPNRESLDFLLL) are excised as a propeptide.

The protein belongs to the calcitonin family. Can form homodimers. Interacts with IDE and INS. Interaction with INS inhibits homodimerization and fibril formation. As to expression, abundant in the islets of Langerhans but is not present in the brain or seven other tissues examined.

It is found in the secreted. Functionally, amylin/IAPP is a glucoregulatory peptide hormone that plays an important role in the regulation of energy homeostasis. Selectively inhibits insulin-stimulated glucose utilization and glycogen deposition in muscle, while not affecting adipocyte glucose metabolism. IAPP function is mediated by the CALCR-RAMPs (AMYRs) receptor complexes. Amylin can also bind CALCR receptor in the absence of RAMPs, although it is more selective for AMYRs. This chain is Islet amyloid polypeptide, found in Rattus norvegicus (Rat).